The chain runs to 897 residues: uncharacterized protein (897 aa).

Disordered regions lie at residues 25–89 and 106–168; these read RLQD…TRKR and PTRL…TPPS. Low complexity-rich tracts occupy residues 32–44, 57–68, and 106–142; these read SSSPSSAPSSSSS, SLQNSQSSSYSL, and PTRLTSTPSNSSSLPSIPSSSSTPSISSIPHTTSSVS. In terms of domain architecture, Helicase ATP-binding spans 263 to 446; sequence SMEQSSKCGG…YSLLKFLRIK (184 aa). 276-283 provides a ligand contact to ATP; that stretch reads DDMGLGKT. The short motif at 397 to 400 is the DEAH box element; sequence DEAH. The segment at 606–655 adopts an RING-type zinc-finger fold; it reads CSVCLDPCLAPVFIIPCGHFTCQECMSMLVGQKYGSSSTSTIIAKCPMCR. The Helicase C-terminal domain occupies 727–890; that stretch reads QARQTILDII…LSRLDKEELL (164 aa).

It belongs to the SNF2/RAD54 helicase family.

Its subcellular location is the cytoplasm. The protein resides in the nucleus. This is an uncharacterized protein from Schizosaccharomyces pombe (strain 972 / ATCC 24843) (Fission yeast).